A 259-amino-acid chain; its full sequence is Uridylate kinase (259 aa).

10–13 (KLSG) contributes to the ATP binding site. Glycine 52 is a binding site for UMP. Positions 53 and 57 each coordinate ATP. Residues aspartate 72 and 134-141 (NGQPFLTT) each bind UMP. ATP-binding residues include tyrosine 168 and aspartate 171. The interval 236-259 (ISSSPEKSEEFGNEVLASPAESTA) is disordered.

It belongs to the UMP kinase family. Homohexamer.

It localises to the cytoplasm. The enzyme catalyses UMP + ATP = UDP + ADP. The protein operates within pyrimidine metabolism; CTP biosynthesis via de novo pathway; UDP from UMP (UMPK route): step 1/1. With respect to regulation, inhibited by UTP. Functionally, catalyzes the reversible phosphorylation of UMP to UDP. The chain is Uridylate kinase from Frankia casuarinae (strain DSM 45818 / CECT 9043 / HFP020203 / CcI3).